We begin with the raw amino-acid sequence, 572 residues long: Proline--tRNA ligase (572 aa).

The protein belongs to the class-II aminoacyl-tRNA synthetase family. ProS type 1 subfamily. In terms of assembly, homodimer.

It localises to the cytoplasm. It carries out the reaction tRNA(Pro) + L-proline + ATP = L-prolyl-tRNA(Pro) + AMP + diphosphate. Catalyzes the attachment of proline to tRNA(Pro) in a two-step reaction: proline is first activated by ATP to form Pro-AMP and then transferred to the acceptor end of tRNA(Pro). As ProRS can inadvertently accommodate and process non-cognate amino acids such as alanine and cysteine, to avoid such errors it has two additional distinct editing activities against alanine. One activity is designated as 'pretransfer' editing and involves the tRNA(Pro)-independent hydrolysis of activated Ala-AMP. The other activity is designated 'posttransfer' editing and involves deacylation of mischarged Ala-tRNA(Pro). The misacylated Cys-tRNA(Pro) is not edited by ProRS. The sequence is that of Proline--tRNA ligase from Yersinia pestis (strain Pestoides F).